The chain runs to 328 residues: MIERIWSGQSRLYLLLLPLSWLYGAVTWLIRASYRLGLRSAWRSPVPVIIVGNLTAGGNGKTPVVIWLVEQLQQRGYRVGVVSRGYGGKSAVYPLLLSDNTTTAQAGDEPVLIFQRTGAPVAVSPKRADAIKALLQSHAVDFIITDDGLQHYALQRDFELVVIDGVRRFGNGWWLPAGPMREREGRLRSVDAAITNGGLAAEGEIPMQLVAREAVNLVTGQRQPAEQLQHVVAMAGIGHPPRFFATLNLLGIKPENEHAFADHQDYSLAQLSRLTSGPQILLMTEKDAVKCRAFALPNWWYLPVDAQLPSDRADKLLLNIQALSPDTK.

Residue 55-62 (TAGGNGKT) coordinates ATP.

The protein belongs to the LpxK family.

The catalysed reaction is a lipid A disaccharide + ATP = a lipid IVA + ADP + H(+). It functions in the pathway glycolipid biosynthesis; lipid IV(A) biosynthesis; lipid IV(A) from (3R)-3-hydroxytetradecanoyl-[acyl-carrier-protein] and UDP-N-acetyl-alpha-D-glucosamine: step 6/6. Functionally, transfers the gamma-phosphate of ATP to the 4'-position of a tetraacyldisaccharide 1-phosphate intermediate (termed DS-1-P) to form tetraacyldisaccharide 1,4'-bis-phosphate (lipid IVA). This is Tetraacyldisaccharide 4'-kinase from Yersinia pseudotuberculosis serotype I (strain IP32953).